A 111-amino-acid chain; its full sequence is Regulator of ribonuclease activity B (111 aa).

The protein belongs to the RraB family. Interacts with the C-terminal region of Rne.

The protein localises to the cytoplasm. In terms of biological role, globally modulates RNA abundance by binding to RNase E (Rne) and regulating its endonucleolytic activity. Can modulate Rne action in a substrate-dependent manner by altering the composition of the degradosome. This Pseudoalteromonas translucida (strain TAC 125) protein is Regulator of ribonuclease activity B.